Consider the following 82-residue polypeptide: Omega-ctenitoxin-Pn1a (82 aa).

Residues 1–21 (MWLKIQVFLLAITLITLGIQA) form the signal peptide. A propeptide spanning residues 22 to 37 (EPNSSPNNPLIEEEAR) is cleaved from the precursor. Cystine bridges form between Cys39/Cys54, Cys46/Cys59, Cys53/Cys70, and Cys61/Cys68. The propeptide occupies 72-82 (KKFIEFFGGGK).

It belongs to the neurotoxin 02 (plectoxin) family. In terms of tissue distribution, expressed by the venom gland.

Its subcellular location is the secreted. In terms of biological role, antagonist of L-type calcium channels (Cav1/CACNA1). Induces immediate clockwise gyration and flaccid paralysis after 6 hours at dose levels of 5 ug per mouse. The polypeptide is Omega-ctenitoxin-Pn1a (Phoneutria nigriventer (Brazilian armed spider)).